Reading from the N-terminus, the 150-residue chain is UPF0756 membrane protein ECA1265 (150 aa).

4 helical membrane passes run 1 to 21, 51 to 71, 82 to 102, and 127 to 147; these read MAYI…GIIS, YGLS…IASG, FLHW…WLGG, and ALFR…SLLI.

It belongs to the UPF0756 family.

It localises to the cell membrane. In Pectobacterium atrosepticum (strain SCRI 1043 / ATCC BAA-672) (Erwinia carotovora subsp. atroseptica), this protein is UPF0756 membrane protein ECA1265.